Here is a 205-residue protein sequence, read N- to C-terminus: Basonuclin zinc finger protein homolog (205 aa).

C2H2-type zinc fingers lie at residues 107–130 (VACD…SAVH) and 135–164 (HTCT…PKLH). The segment at 145-168 (QFSSRRSRNRHSSNNNPKLHMPES) is disordered.

In terms of tissue distribution, expressed in the VA and VB motor neurons and at lower levels in the SABV neuron pair.

Its subcellular location is the nucleus. Functionally, probable transcription factor. Involved in motor neuron fate determination and maintenance, acting as a transcriptional repressor to counteract gene activation by transcription factor unc-3 in a subset of motor neurons. Required throughout development to repress transcription by unc-3, probably acting by binding to specific promoter elements. Represses expression of DA and DB motor neuron-specific effector genes, such as unc-129 and unc-53, in VA and VB motor neurons. This is Basonuclin zinc finger protein homolog from Caenorhabditis elegans.